Consider the following 373-residue polypeptide: 3-dehydroquinate synthase (373 aa).

Residues 67 to 72 (EGEETK), 101 to 105 (GVILD), 125 to 126 (TT), Lys-138, and Lys-147 each bind NAD(+). The Zn(2+) site is built by Glu-180, His-240, and His-256.

This sequence belongs to the sugar phosphate cyclases superfamily. Dehydroquinate synthase family. NAD(+) is required as a cofactor. It depends on Co(2+) as a cofactor. Requires Zn(2+) as cofactor.

Its subcellular location is the cytoplasm. The enzyme catalyses 7-phospho-2-dehydro-3-deoxy-D-arabino-heptonate = 3-dehydroquinate + phosphate. The protein operates within metabolic intermediate biosynthesis; chorismate biosynthesis; chorismate from D-erythrose 4-phosphate and phosphoenolpyruvate: step 2/7. Catalyzes the conversion of 3-deoxy-D-arabino-heptulosonate 7-phosphate (DAHP) to dehydroquinate (DHQ). This is 3-dehydroquinate synthase from Chlamydia trachomatis serovar L2 (strain ATCC VR-902B / DSM 19102 / 434/Bu).